The sequence spans 97 residues: Early nodulin-75 (97 aa).

The tract at residues 1 to 97 (RPHVHPPPEH…PEYQPPHEKP (97 aa)) is disordered. Pro residues-rich tracts occupy residues 9-22 (EHQP…PEYQ) and 31-43 (VHPP…PYQK). Over residues 76–97 (PPHEKPPHEHPPPEYQPPHEKP) the composition is skewed to basic and acidic residues.

Belongs to the nodulin 75 family.

Involved in early stages of root nodule development. The chain is Early nodulin-75 (ENOD2) from Medicago sativa (Alfalfa).